Here is a 344-residue protein sequence, read N- to C-terminus: Phenylalanine--tRNA ligase alpha subunit (344 aa).

Glutamate 259 contacts Mg(2+).

Belongs to the class-II aminoacyl-tRNA synthetase family. Phe-tRNA synthetase alpha subunit type 1 subfamily. Tetramer of two alpha and two beta subunits. It depends on Mg(2+) as a cofactor.

It localises to the cytoplasm. The enzyme catalyses tRNA(Phe) + L-phenylalanine + ATP = L-phenylalanyl-tRNA(Phe) + AMP + diphosphate + H(+). The protein is Phenylalanine--tRNA ligase alpha subunit of Petrotoga mobilis (strain DSM 10674 / SJ95).